The chain runs to 261 residues: Arcelin-5B (261 aa).

An N-terminal signal peptide occupies residues 1–21; that stretch reads MASSKLLSLALFLVLLTHANS. 2 N-linked (GlcNAc...) asparagine glycosylation sites follow: asparagine 91 and asparagine 100. A disulfide bridge links cysteine 167 with cysteine 203.

Belongs to the leguminous lectin family. As to quaternary structure, monomer.

Functionally, seed storage. This carbohydrate-binding lectin has toxic effects on bean bruchid pests. This Phaseolus vulgaris (Kidney bean) protein is Arcelin-5B (ARC5B).